The following is a 448-amino-acid chain: MKNYQQIQPYHCLKKAYEIGKHIRKIKKNYLSHRTVCFHRKRSWQSIVFYTNTGLNNCIFKIYLSLLGYRISLYFMDLCRFLRFYNPPRRDKKFLHRSRVRGYKNHSIPTDLIDGELIREINRKLTWIEVTLSDLYIWKRYFLFPSSSSDGKKINDHPLLGTKGTESIIIVHESIGLLPRSITRTISRFKAELTNQSKPLILREFGLTRYQALSSLQYIGCLISIPSIISTLFQQYFSEPWIRYWWNNEQSQIFLAPAQEDKTLEEVEGIEELSRLDQIIGNSFLGTQSQGLGDGIHEETIESVRNRNDNGIEIISHSLTDIIYLITLSGLFVAGEERLVISNSWAQELFYGLSDTMKAFFILLSTDSCIGFHSPHGWELATSFFHSGFVRDGRIISCSVSTFPVVLDTVLKYLIFRHLNRISPSIVATYHTMNELDSYRIRNKSWKI.

4 consecutive transmembrane segments (helical) span residues I47–L67, L213–F233, I314–A334, and I395–I415.

It belongs to the CemA family.

It is found in the plastid membrane. It carries out the reaction K(+)(in) + H(+)(out) = K(+)(out) + H(+)(in). Its function is as follows. May be involved in proton extrusion. The polypeptide is Potassium/proton antiporter CemA (Aneura mirabilis (Parasitic liverwort)).